The primary structure comprises 151 residues: Snaclec 3 (151 aa).

The N-terminal stretch at 1–23 (MGRLVFVSFSLLVVFLSLSGTAA) is a signal peptide. 3 disulfides stabilise this stretch: Cys-25–Cys-36, Cys-53–Cys-149, and Cys-125–Cys-141. In terms of domain architecture, C-type lectin spans 32-150 (YEGHCYKPFN…CGEINPFVCK (119 aa)).

This sequence belongs to the snaclec family. As to quaternary structure, heterodimer; disulfide-linked. As to expression, expressed by the venom gland.

Its subcellular location is the secreted. Its function is as follows. Interferes with one step of hemostasis (modulation of platelet aggregation, or coagulation cascade, for example). This chain is Snaclec 3, found in Sistrurus catenatus edwardsii (Desert massasauga).